Here is a 469-residue protein sequence, read N- to C-terminus: Acetyl-CoA decarbonylase/synthase complex subunit beta 1 (469 aa).

The [Ni-Fe-S] cluster site is built by Cys-189, Cys-192, Cys-278, and Cys-280.

This sequence belongs to the CdhC family. As to quaternary structure, monomer. The ACDS complex is made up of alpha, epsilon, beta, gamma and delta chains with a probable stoichiometry of (alpha(2)epsilon(2))(4)-beta(8)-(gamma(1)delta(1))(8) (Potential). [Ni-Fe-S] cluster is required as a cofactor.

It catalyses the reaction Co(I)-[corrinoid Fe-S protein] + acetyl-CoA + H(+) = methyl-Co(III)-[corrinoid Fe-S protein] + CO + CoA. It functions in the pathway one-carbon metabolism; methanogenesis from acetate. Its function is as follows. Part of a complex that catalyzes the reversible cleavage of acetyl-CoA, allowing growth on acetate as sole source of carbon and energy. The alpha-epsilon complex generates CO from CO(2), while the beta subunit (this protein) combines the CO with CoA and a methyl group to form acetyl-CoA. The methyl group, which is incorporated into acetyl-CoA, is transferred to the beta subunit by a corrinoid iron-sulfur protein (the gamma-delta complex). This is Acetyl-CoA decarbonylase/synthase complex subunit beta 1 (cdhC1) from Methanosarcina mazei (strain ATCC BAA-159 / DSM 3647 / Goe1 / Go1 / JCM 11833 / OCM 88) (Methanosarcina frisia).